We begin with the raw amino-acid sequence, 569 residues long: Estrogen receptor (569 aa).

A modulating region spans residues 1–151 (MYPKEEHSAG…GFDSGKETRF (151 aa)). Residues 28–37 (PTQTFGTSSP) are compositionally biased toward polar residues. Residues 28–65 (PTQTFGTSSPAEPASVGYYPAPPDPHEEHLQTLGGGSS) are disordered. NR C4-type zinc fingers lie at residues 152 to 172 (CAVC…CEGC) and 188 to 212 (CPAT…LRKC). Positions 152–217 (CAVCSDYASG…RLRKCYEVGM (66 aa)) form a DNA-binding region, nuclear receptor. Positions 218–278 (MKGGIRKDRG…SGGVVSTLCM (61 aa)) are hinge. The tract at residues 223–271 (RKDRGGRSVRRERRRSSNEDRDKSSSDQCSRAGVRTTGPQDKRKKRSGG) is disordered. Residues 237–247 (RSSNEDRDKSS) are compositionally biased toward basic and acidic residues. The NR LBD domain occupies 279–515 (SPDQVLLLLL…DLLLEMLDAQ (237 aa)). Residues 523 to 532 (VQRVWSQSEK) are compositionally biased toward polar residues. A disordered region spans residues 523–569 (VQRVWSQSEKNPPSTPTTSSSSSNNSPRGGAAAIQSNGACHSHSPDP). Residues 538–549 (PTTSSSSSNNSP) show a composition bias toward low complexity.

The protein belongs to the nuclear hormone receptor family. NR3 subfamily. Binds DNA as a homodimer. Can form a heterodimer with ER-beta.

It is found in the nucleus. Functionally, the steroid hormones and their receptors are involved in the regulation of eukaryotic gene expression and affect cellular proliferation and differentiation in target tissues. This chain is Estrogen receptor (esr1), found in Danio rerio (Zebrafish).